Consider the following 338-residue polypeptide: MYSLDWPRAYGIPNSTATFKSLPEDFQVNELFEGQFNGEGEHIVLKIEKRGLTTEEVVKSLARLINKPVKLISHAGLKDKQALTTQWLSVHAPGEIIDGIETLEAPGWRILECTRHNKKLKPGFLSGNHFIITLRNVSDESDLIHRIEQIKFKGVPNYFGEQRFGRDGGNLIKAEEILVQGRKVKDRFLKGMYFSAARSWLYNLILSRRVKESSWNLPLLGDVIQLVGSNSIFVNDKSMDEQLLQRIGEKDVSPASPLPGRSKNLVKGTALQIINDVYEEWSAWLDGLEKNGLEEAWRANILYAEQIEYRINQGTVELSFVLPAGAYATVVLRELVQY.

Catalysis depends on D79, which acts as the Nucleophile. Residues 154 to 303 (GVPNYFGEQR…EEAWRANILY (150 aa)) form the TRUD domain.

It belongs to the pseudouridine synthase TruD family.

The catalysed reaction is uridine(13) in tRNA = pseudouridine(13) in tRNA. Its function is as follows. Responsible for synthesis of pseudouridine from uracil-13 in transfer RNAs. This chain is tRNA pseudouridine synthase D, found in Legionella pneumophila (strain Corby).